The primary structure comprises 271 residues: Proteasome inhibitor PI31 subunit (271 aa).

Alanine 2 carries the N-acetylalanine modification. Residues 2 to 150 form an important for homodimerization and interaction with FBXO7 region; it reads AGLEVLFASA…PIHEQWEKAN (149 aa). The residue at position 153 (serine 153) is a Phosphoserine. Position 205 is an omega-N-methylarginine (arginine 205). An Asymmetric dimethylarginine modification is found at arginine 219. The tract at residues 222-271 is disordered; that stretch reads IDPSSGLPNRLPPGAVPPGARFDPFGPIGTSPPGPNPDHLPPPGYDDMYL. At arginine 231 the chain carries Omega-N-methylarginine. The span at 251 to 265 shows a compositional bias: pro residues; it reads TSPPGPNPDHLPPPG. A Phosphoserine modification is found at serine 252.

This sequence belongs to the proteasome inhibitor PI31 family. As to quaternary structure, monomer and homodimer. Interacts with FBXO7. Interacts with the 20S proteasome.

The protein localises to the cytoplasm. It is found in the endoplasmic reticulum. In terms of biological role, plays an important role in control of proteasome function. Inhibits the hydrolysis of protein and peptide substrates by the 20S proteasome. Also inhibits the activation of the proteasome by the proteasome regulatory proteins PA700 and PA28. The chain is Proteasome inhibitor PI31 subunit (PSMF1) from Homo sapiens (Human).